Here is a 553-residue protein sequence, read N- to C-terminus: MSTSRLQQQFIRLWQRYNGQSTETTLQALAEVLNCSRRHVRSLLGKMQHAGWLDWQAEAGRGKRSQLIFLRSGLALQQQRAEELLEQDHIDQLVQLVGDKKAVRQMLLSQLGRSFRQGKHILRVLYYRPLENLLPGTALRRSETHMVRQIFNGLTRINEENGELEPDLSHHWQAITPLHWRFYLRPAIHFHHGRELEMSDVISSLTRLIPQPLFSHIAEVRSPTPYVIDVYLHSPDHWLPWLLGSVHAMILPQEWETQPDFHRQPIGTGPYSVIRNHHSQLKIQAFDNYFGFRALIDEVNIWVLPELSEELVYSGVQLQADDTGKNELESRLEEGCYFLLFDQRSPQACTPEIRRWLCELITPIALLSHADPFYQRYWSPAYGMLPRWHHNRLTTQEPKPEGLNELTLTFYSEHSEFDAISQTLTQLLAAQGVTLKIQVLDYTRWYQGDAQSDIWLGSANFYLPLEFSLFATLYEMPLLQHCLSEELHQDIESWRNNTLLMADWSQRLVSQHQFHPLFHHWLELYGQHSMRGVRMNTLGWFDFKSAWFTPPEA.

The HTH marR-type domain maps to 1–113; that stretch reads MSTSRLQQQF…RQMLLSQLGR (113 aa). Positions 26–49 form a DNA-binding region, H-T-H motif; it reads LQALAEVLNCSRRHVRSLLGKMQH. Residues 163-494 form a solute-binding region; the sequence is ELEPDLSHHW…EELHQDIESW (332 aa).

In terms of biological role, activates the small RNA gene sgrS under glucose-phosphate stress conditions as well as yfdZ. Represses its own transcription under both stress and non-stress conditions. Might act as a sensor of the intracellular accumulation of phosphoglucose by binding these molecules in its C-terminal solute-binding domain. This Yersinia pseudotuberculosis serotype I (strain IP32953) protein is HTH-type transcriptional regulator SgrR.